The chain runs to 1096 residues: Pentatricopeptide repeat-containing protein At5g55840 (1096 aa).

PPR repeat units follow at residues 122 to 156, 157 to 191, 192 to 226, 227 to 261, 262 to 296, 297 to 331, 332 to 366, 367 to 401, 402 to 436, 437 to 471, 472 to 506, 507 to 541, 542 to 576, 577 to 607, 612 to 646, 647 to 681, 683 to 717, 718 to 752, 753 to 787, 788 to 822, 823 to 857, 858 to 892, 893 to 927, 928 to 962, 963 to 997, 998 to 1032, and 1033 to 1068; these read NPSV…GFNP, SVYT…KICP, DVAT…GYAP, TIVT…GVDA, DVCT…MIHP, NEVT…GLSP, NHVT…GLTP, SEVS…GVCV, GRIT…GIDP, DIVT…GLSP, NGII…GHTR, DHFT…GILP, NTVS…GHHP, TFFT…LHAV, DTVM…SILP, DSYT…GNVL, NKVM…GHTP, DIVT…NGGP, NLTT…GILP, DKLT…GVEV, DRYT…GISL, DKDT…GISP, ESRK…KICP, PNVA…KLVP, TIAS…GLKL, DLVS…GFLA, and NATT…GFIT.

The protein belongs to the PPR family. P subfamily.

This chain is Pentatricopeptide repeat-containing protein At5g55840, found in Arabidopsis thaliana (Mouse-ear cress).